We begin with the raw amino-acid sequence, 329 residues long: Capsular polysaccharide phosphotransferase WcwK (329 aa).

It belongs to the stealth family.

This is Capsular polysaccharide phosphotransferase WcwK (wcwK) from Streptococcus pneumoniae.